The chain runs to 376 residues: Lysocardiolipin acyltransferase 1 (376 aa).

The helical transmembrane segment at 9-29 threads the bilayer; sequence FILFLFAGSFFGSIFMLGPIL. Residue Asn35 is glycosylated (N-linked (GlcNAc...) asparagine). The helical transmembrane segment at 48-68 threads the bilayer; the sequence is ATWLTLPVALLETMFGVRVVI. Positions 85–90 match the HXXXXD motif motif; sequence HRTRVD. Position 183 is an N6-acetyllysine (Lys183). The next 2 helical transmembrane spans lie at 309 to 329 and 336 to 356; these read LLSI…IYLY and FIIS…LEII.

This sequence belongs to the 1-acyl-sn-glycerol-3-phosphate acyltransferase family. Widely expressed with highest expression in heart, liver and 12.5 dpc aorta-gonad-mesonephros and lower levels in the 16 dpc fetal liver and adult bone marrow. In bone marrow, highest levels are found in B-cells compared with whole bone marrow, T-cells, erythrocytes, and granulocytes.

The protein localises to the endoplasmic reticulum membrane. The enzyme catalyses a 1-acyl-sn-glycero-3-phosphate + an acyl-CoA = a 1,2-diacyl-sn-glycero-3-phosphate + CoA. The catalysed reaction is a 1-acyl-sn-glycero-3-phospho-(1D-myo-inositol) + an acyl-CoA = a 1,2-diacyl-sn-glycero-3-phospho-(1D-myo-inositol) + CoA. It carries out the reaction 1-acyl-sn-glycero-3-phospho-(1'-sn-glycerol) + an acyl-CoA = a 1,2-diacyl-sn-glycero-3-phospho-(1'-sn-glycerol) + CoA. It catalyses the reaction 1-hexadecanoyl-sn-glycero-3-phosphate + (9Z)-octadecenoyl-CoA = 1-hexadecanoyl-2-(9Z-octadecenoyl)-sn-glycero-3-phosphate + CoA. The enzyme catalyses 1-(9Z-octadecenoyl)-sn-glycero-3-phosphate + (9Z)-octadecenoyl-CoA = 1,2-di-(9Z-octadecenoyl)-sn-glycero-3-phosphate + CoA. The catalysed reaction is 1-(9Z,12Z)-octadecadienoyl-sn-glycero-3-phosphate + (9Z)-octadecenoyl-CoA = 1-(9Z,12Z)-octadecadienoyl-2-(9Z)-octadecenoyl-sn-glycero-3-phosphate + CoA. It carries out the reaction 1-(9Z,12Z,15Z)-octadecatrienoyl-sn-glycero-3-phosphate + (9Z)-octadecenoyl-CoA = 1-(9Z,12Z,15Z)-octadecatrienoyl-2-(9Z)-octadecenoyl-sn-glycero-3-phosphate + CoA. It catalyses the reaction 1-(9Z-octadecenoyl)-sn-glycero-3-phosphate + hexadecanoyl-CoA = 1-(9Z)-octadecenoyl-2-hexadecanoyl-sn-glycero-3-phosphate + CoA. The enzyme catalyses 1-(9Z-octadecenoyl)-sn-glycero-3-phosphate + octadecanoyl-CoA = 1-(9Z-octadecenoyl)-2-octadecanoyl-sn-glycero-3-phosphate + CoA. The catalysed reaction is 1-acyl-sn-glycero-3-phospho-(1'-sn-glycerol) + (9Z)-octadecenoyl-CoA = 1-acyl-2-(9Z-octadecenoyl)-sn-glycero-3-phospho-(1'-sn-glycerol) + CoA. It carries out the reaction a 1-acyl-sn-glycero-3-phospho-(1D-myo-inositol) + (9Z)-octadecenoyl-CoA = a 1-acyl-2-(9Z-octadecenoyl)-sn-glycero-3-phospho-(1D-myo-inositol) + CoA. It catalyses the reaction 1-hexadecanoyl-sn-glycero-3-phospho-(1D-myo-inositol) + hexadecanoyl-CoA = 1,2-dihexadecanoyl-sn-glycero-3-phospho-(1D-myo-inositol) + CoA. The enzyme catalyses 1-hexadecanoyl-sn-glycero-3-phospho-(1D-myo-inositol) + octadecanoyl-CoA = 1-hexadecanoyl-2-octadecanoyl-sn-glycero-3-phospho-(1D-myo-inositol) + CoA. The catalysed reaction is 1-hexadecanoyl-sn-glycero-3-phospho-(1D-myo-inositol) + (9Z)-octadecenoyl-CoA = 1-hexadecanoyl-2-(9Z-octadecenoyl)-sn-glycero-3-phospho-(1D-myo-inositol) + CoA. It carries out the reaction 1-hexadecanoyl-sn-glycero-3-phospho-(1D-myo-inositol) + (9Z,12Z)-octadecadienoyl-CoA = 1-hexadecanoyl-2-(9Z,12Z-octadecadienoyl)-sn-glycero-3-phospho-(1D-myo-inositol) + CoA. It catalyses the reaction 1-hexadecanoyl-sn-glycero-3-phospho-(1D-myo-inositol) + (5Z,8Z,11Z,14Z)-eicosatetraenoyl-CoA = 1-hexadecanoyl-2-(5Z,8Z,11Z,14Z-eicosatetraenoyl)-sn-glycero-3-phospho-D-myo-inositol + CoA. The enzyme catalyses 1-hexadecanoyl-sn-glycero-3-phospho-(1'-sn-glycerol) + hexadecanoyl-CoA = 1,2-dihexadecanoyl-sn-glycero-3-phospho-(1'-sn-glycerol) + CoA. The catalysed reaction is 1-hexadecanoyl-sn-glycero-3-phospho-(1'-sn-glycerol) + octadecanoyl-CoA = 1-hexadecanoyl-2-octadecanoyl-sn-glycero-3-phospho-(1'-sn-glycerol) + CoA. It carries out the reaction 1-hexadecanoyl-sn-glycero-3-phospho-(1'-sn-glycerol) + (9Z)-octadecenoyl-CoA = 1-hexadecanoyl-2-(9Z-octadecenoyl)-sn-glycero-3-phospho-(1'-sn-glycerol) + CoA. It catalyses the reaction 1-hexadecanoyl-sn-glycero-3-phospho-(1'-sn-glycerol) + (9Z,12Z)-octadecadienoyl-CoA = 1-hexadecanoyl-2-(9Z,12Z-octadecadienoyl)-sn-glycero-3-phospho-(1'-sn-glycerol) + CoA. The enzyme catalyses 1-tetradecanoyl-sn-glycero-3-phospho-(1'-sn-glycerol) + (9Z)-octadecenoyl-CoA = 1-tetradecanoyl-2-(9Z-octadecenoyl)-sn-glycero-3-phospho-(1'-sn-glycerol) + CoA. The catalysed reaction is 1-octadecanoyl-sn-glycero-3-phospho-(1'-sn-glycerol) + (9Z)-octadecenoyl-CoA = 1-octadecanoyl-2-(9Z-octadecenoyl)-sn-glycero-3-phospho-(1'-sn-glycerol) + CoA. It carries out the reaction 1-(9Z-octadecenoyl)-sn-glycero-3-phospho-(1'-sn-glycerol) + (9Z)-octadecenoyl-CoA = 1,2-di-(9Z-octadecenoyl)-sn-glycero-3-phospho-(1'-sn-glycerol) + CoA. It catalyses the reaction 1-hexadecanoyl-sn-glycero-3-phospho-(1D-myo-inositol) + dodecanoyl-CoA = 1-hexadecanoyl-2-dodecanoyl-sn-glycero-3-phospho-(1D-myo-inositol) + CoA. The enzyme catalyses 1',3'-bis-[1-acyl-sn-glycero-3-phospho]-glycerol + (9Z)-octadecenoyl-CoA = 1'-[1-acyl-2-(9Z)-octadecenoyl-sn-glycero-3-phospho],3'-[1-acyl,2-hydroxy-sn-glycero-3-phospho]-glycerol + CoA. The catalysed reaction is 1'-[1,2-diacyl-sn-glycero-3-phospho],3'-[1-acyl-sn-glycero-3-phospho]-glycerol + (9Z)-octadecenoyl-CoA = 1'-[1,2-diacyl-sn-glycero-3-phospho],3'-[1-acyl,2-(9Z)-octadecenoyl-sn-glycero-3-phospho]-glycerol + CoA. It carries out the reaction 1'-[1,2-diacyl-sn-glycero-3-phospho],3'-[1-acyl-sn-glycero-3-phospho]-glycerol + (9Z,12Z)-octadecadienoyl-CoA = 1'-[1,2-diacyl-sn-glycero-3-phospho],3'-[1-acyl,2-(9Z,12Z)-octadecadienoyl-sn-glycero-3-phospho]-glycerol + CoA. It catalyses the reaction 1'-[1,2-diacyl-sn-glycero-3-phospho],3'-[1-acyl-sn-glycero-3-phospho]-glycerol + dodecanoyl-CoA = 1'-[1,2-diacyl-sn-glycero-3-phospho],3'-[1-acyl,2-dodecanoyl-sn-glycero-3-phospho]-glycerol + CoA. The enzyme catalyses 1',3'-bis-[1-acyl-sn-glycero-3-phospho]-glycerol + dodecanoyl-CoA = 1'-[1-acyl-2-dodecanoyl-sn-glycero-3-phospho],3'-[1-acyl,2-hydroxy-sn-glycero-3-phospho]-glycerol + CoA. The catalysed reaction is a 1-acyl-sn-glycero-3-phosphate + (9Z)-octadecenoyl-CoA = a 1-acyl-2-(9Z-octadecenoyl)-sn-glycero-3-phosphate + CoA. It carries out the reaction 1',3'-bis-[1-acyl-sn-glycero-3-phospho]-glycerol + (9Z,12Z)-octadecadienoyl-CoA = 1'-[1-acyl-2-(9Z,12Z)-octadecadienoyl-sn-glycero-3-phospho],3'-[1-acyl,2-hydroxy-sn-glycero-3-phospho]-glycerol + CoA. It catalyses the reaction 1',3'-bis-[1-acyl-sn-glycero-3-phospho]-glycerol + hexadecanoyl-CoA = 1'-[1-acyl-2-hexadecanoyl-sn-glycero-3-phospho],3'-[1-acyl,2-hydroxy-sn-glycero-3-phospho]-glycerol + CoA. The enzyme catalyses 1',3'-bis-[1-acyl-sn-glycero-3-phospho]-glycerol + octadecanoyl-CoA = 1'-[1-acyl-2-octadecanoyl-sn-glycero-3-phospho],3'-[1-acyl,2-hydroxy-sn-glycero-3-phospho]-glycerol + CoA. The catalysed reaction is 1'-[1,2-diacyl-sn-glycero-3-phospho],3'-[1-acyl-sn-glycero-3-phospho]-glycerol + octanoyl-CoA = 1'-[1,2-diacyl-sn-glycero-3-phospho],3'-[1-acyl,2-octanoyl-sn-glycero-3-phospho]-glycerol + CoA. It carries out the reaction 1',3'-bis-[1-acyl-sn-glycero-3-phospho]-glycerol + octanoyl-CoA = 1'-[1-acyl-2-octanoyl-sn-glycero-3-phospho],3'-[1-acyl,2-hydroxy-sn-glycero-3-phospho]-glycerol + CoA. It catalyses the reaction 1'-[1,2-diacyl-sn-glycero-3-phospho],3'-[1-acyl-sn-glycero-3-phospho]-glycerol + hexadecanoyl-CoA = 1'-[1,2-diacyl-sn-glycero-3-phospho],3'-[1-acyl,2-hexadecanoyl-sn-glycero-3-phospho]-glycerol + CoA. The enzyme catalyses 1'-[1,2-diacyl-sn-glycero-3-phospho],3'-[1-acyl-sn-glycero-3-phospho]-glycerol + (5Z,8Z,11Z,14Z)-eicosatetraenoyl-CoA = 1'-[1,2-diacyl-sn-glycero-3-phospho],3'-[1-acyl,2-(5Z,8Z,11Z,14Z)-eicosatetraenoyl-sn-glycero-3-phospho]-glycerol + CoA. The catalysed reaction is 1',3'-bis-[1-acyl-sn-glycero-3-phospho]-glycerol + (5Z,8Z,11Z,14Z)-eicosatetraenoyl-CoA = 1'-[1-acyl-2-(5Z,8Z,11Z,14Z)-eicosatetraenoyl-sn-glycero-3-phospho],3'-[1-acyl,2-hydroxy-sn-glycero-3-phospho]-glycerol + CoA. It carries out the reaction a 1-acyl-sn-glycero-3-phospho-(1D-myo-inositol) + octadecanoyl-CoA = a 1-acyl-2-octadecanoyl-sn-glycero-3-phospho-(1D-myo-inositol) + CoA. It catalyses the reaction a 2-acyl-sn-glycero-3-phospho-D-myo-inositol + octadecanoyl-CoA = 1-octadecanoyl-2-acyl-sn-glycero-3-phospho-1D-myo-inositol + CoA. It participates in phospholipid metabolism; CDP-diacylglycerol biosynthesis; CDP-diacylglycerol from sn-glycerol 3-phosphate: step 2/3. Its function is as follows. Exhibits acyl-CoA:lysocardiolipin acyltransferase (ALCAT) activity; catalyzes the reacylation of lyso-cardiolipin to cardiolipin (CL), a key step in CL remodeling. Recognizes both monolysocardiolipin and dilysocardiolipin as substrates with a preference for linoleoyl-CoA and oleoyl-CoA as acyl donors. Also exhibits 1-acyl-sn-glycerol-3-phosphate acyltransferase activity (AGPAT) activity; converts 1-acyl-sn-glycerol-3- phosphate (lysophosphatidic acid or LPA) into 1,2-diacyl-sn-glycerol-3- phosphate (phosphatidic acid or PA) by incorporating an acyl moiety at the sn-2 position of the glycerol backbone. Possesses lysophosphatidylinositol acyltransferase (LPIAT) activity. Possesses lysophosphatidylglycerol acyltransferase (LPGAT) activity. Required for establishment of the hematopoietic and endothelial lineages. The chain is Lysocardiolipin acyltransferase 1 (Lclat1) from Mus musculus (Mouse).